The chain runs to 253 residues: Zinc import ATP-binding protein ZnuC (253 aa).

The region spanning 6–227 (VTLNKISVTF…FGNRGAEQLA (222 aa)) is the ABC transporter domain. 38-45 (GPNGAGKS) provides a ligand contact to ATP.

This sequence belongs to the ABC transporter superfamily. Zinc importer (TC 3.A.1.15.5) family. In terms of assembly, the complex is composed of two ATP-binding proteins (ZnuC), two transmembrane proteins (ZnuB) and a solute-binding protein (ZnuA).

Its subcellular location is the cell inner membrane. It carries out the reaction Zn(2+)(out) + ATP(in) + H2O(in) = Zn(2+)(in) + ADP(in) + phosphate(in) + H(+)(in). In terms of biological role, part of the ABC transporter complex ZnuABC involved in zinc import. Responsible for energy coupling to the transport system. In Yersinia pseudotuberculosis serotype I (strain IP32953), this protein is Zinc import ATP-binding protein ZnuC.